Reading from the N-terminus, the 285-residue chain is Stress response regulator protein 1 (285 aa).

Composition is skewed to low complexity over residues 43-58 and 128-138; these read DTSS…SSNN and SIISSKSSNKS. Disordered stretches follow at residues 43–66 and 114–142; these read DTSS…SDQQ and PLTP…TTVV. In terms of domain architecture, Response regulatory spans 158–276; the sequence is SFLIVDDNII…LDFMANSIDD (119 aa). The residue at position 209 (D209) is a 4-aspartylphosphate.

Required for stress adaptation, morphogenesis and virulence. The protein is Stress response regulator protein 1 (SRR1) of Candida dubliniensis (strain CD36 / ATCC MYA-646 / CBS 7987 / NCPF 3949 / NRRL Y-17841) (Yeast).